A 57-amino-acid chain; its full sequence is uncharacterized protein (57 aa).

The segment at 34–57 (QGKRGETEGQIEISRKAGHPAPAF) is disordered.

This is an uncharacterized protein from Saccharomyces cerevisiae (strain ATCC 204508 / S288c) (Baker's yeast).